The sequence spans 93 residues: Large ribosomal subunit protein uL23 (93 aa).

Belongs to the universal ribosomal protein uL23 family. In terms of assembly, part of the 50S ribosomal subunit. Contacts protein L29, and trigger factor when it is bound to the ribosome.

In terms of biological role, one of the early assembly proteins it binds 23S rRNA. One of the proteins that surrounds the polypeptide exit tunnel on the outside of the ribosome. Forms the main docking site for trigger factor binding to the ribosome. The chain is Large ribosomal subunit protein uL23 from Campylobacter curvus (strain 525.92).